Reading from the N-terminus, the 383-residue chain is Homoserine O-acetyltransferase (383 aa).

In terms of domain architecture, AB hydrolase-1 spans 52–362; sequence NAILVCHALT…PWGHDAFLLD (311 aa). The active-site Nucleophile is serine 158. Arginine 227 contacts substrate. Residues aspartate 323 and histidine 356 contribute to the active site. Residue aspartate 357 participates in substrate binding.

Belongs to the AB hydrolase superfamily. MetX family. As to quaternary structure, homodimer.

It localises to the cytoplasm. It carries out the reaction L-homoserine + acetyl-CoA = O-acetyl-L-homoserine + CoA. It participates in amino-acid biosynthesis; L-methionine biosynthesis via de novo pathway; O-acetyl-L-homoserine from L-homoserine: step 1/1. Transfers an acetyl group from acetyl-CoA to L-homoserine, forming acetyl-L-homoserine. This Symbiobacterium thermophilum (strain DSM 24528 / JCM 14929 / IAM 14863 / T) protein is Homoserine O-acetyltransferase.